Here is a 325-residue protein sequence, read N- to C-terminus: D-alanine--D-alanine ligase (325 aa).

An ATP-grasp domain is found at 107-311 (KRLLLSESLP…YEALCVEVLK (205 aa)). ATP is bound at residue 137 to 192 (VDTLGLPLIVKPAREGSSLGLSKVTERAAMAAAVALAEKMDADILCEQFISGDEVT). Mg(2+) contacts are provided by aspartate 264, glutamate 278, and asparagine 280.

The protein belongs to the D-alanine--D-alanine ligase family. The cofactor is Mg(2+). It depends on Mn(2+) as a cofactor.

The protein resides in the cytoplasm. It carries out the reaction 2 D-alanine + ATP = D-alanyl-D-alanine + ADP + phosphate + H(+). The protein operates within cell wall biogenesis; peptidoglycan biosynthesis. Functionally, cell wall formation. The sequence is that of D-alanine--D-alanine ligase from Polaromonas naphthalenivorans (strain CJ2).